A 185-amino-acid chain; its full sequence is UPF0301 protein Csal_0058 (185 aa).

It belongs to the UPF0301 (AlgH) family.

This Chromohalobacter salexigens (strain ATCC BAA-138 / DSM 3043 / CIP 106854 / NCIMB 13768 / 1H11) protein is UPF0301 protein Csal_0058.